The sequence spans 298 residues: HTH-type transcriptional regulator ArgP (298 aa).

Residues 4 to 60 (VDYRWVAALDAVIAQRGFERAAEKLCITQSAVSQRIKQLEKLMAQPLLVREQPPRPT) form the HTH lysR-type domain. Positions 21–40 (FERAAEKLCITQSAVSQRIK) form a DNA-binding region, H-T-H motif.

This sequence belongs to the LysR transcriptional regulatory family. As to quaternary structure, homodimer.

Functionally, controls the transcription of genes involved in arginine and lysine metabolism. The chain is HTH-type transcriptional regulator ArgP from Photobacterium profundum (strain SS9).